A 78-amino-acid polypeptide reads, in one-letter code: Omega-conotoxin PnVIA (78 aa).

The signal sequence occupies residues 1-22; sequence MKLTCMMIIAVLFLTAWTFVMA. Residues 23–45 constitute a propeptide that is removed on maturation; it reads DDPRDEPEARDEMNPAASKLNER. 3 disulfide bridges follow: cysteine 47–cysteine 65, cysteine 54–cysteine 69, and cysteine 64–cysteine 73. Glutamine 76 is subject to Glutamine amide.

As to expression, expressed by the venom duct.

Its subcellular location is the secreted. In terms of biological role, omega-conotoxins act at presynaptic membranes, they bind and block voltage-gated calcium channels (Cav). Acts on high voltage-activated (HVA) calcium currents in molluscan neurons. This Conus pennaceus (Feathered cone) protein is Omega-conotoxin PnVIA.